Reading from the N-terminus, the 417-residue chain is Hydroxysqualene dehydroxylase (417 aa).

This sequence belongs to the HpnE family.

It catalyses the reaction squalene + FAD + H2O + H(+) = hydroxysqualene + FADH2. It participates in secondary metabolite biosynthesis; hopanoid biosynthesis. Functionally, involved in the biosynthesis of the hopanoid precursor squalene (SQ) from farnesyl diphosphate (FPP). Catalyzes the third (last) step, the reduction of hydroxysqualene (HSQ) to SQ. This Sinorhizobium fredii (strain NBRC 101917 / NGR234) protein is Hydroxysqualene dehydroxylase.